A 438-amino-acid chain; its full sequence is Na(+)/H(+) antiporter NhaA (438 aa).

11 helical membrane-spanning segments follow: residues 23–43 (FGGI…NSFL), 62–82 (FFIG…LFFL), 104–124 (SFPV…YFFL), 133–153 (GFGI…MLLG), 162–182 (VFLI…IALF), 185–205 (TNLK…LALL), 221–241 (VLLW…AVVL), 302–322 (FLAP…NAGV), 337–357 (FGVI…ITFI), 372–392 (WWHI…SMFI), and 410–430 (IAIL…LFAL).

It belongs to the NhaA Na(+)/H(+) (TC 2.A.33) antiporter family.

It localises to the cell inner membrane. The catalysed reaction is Na(+)(in) + 2 H(+)(out) = Na(+)(out) + 2 H(+)(in). Its function is as follows. Na(+)/H(+) antiporter that extrudes sodium in exchange for external protons. The sequence is that of Na(+)/H(+) antiporter NhaA from Helicobacter pylori (strain P12).